Here is a 259-residue protein sequence, read N- to C-terminus: Imidazole glycerol phosphate synthase subunit HisF (259 aa).

Catalysis depends on residues D11 and D130.

It belongs to the HisA/HisF family. In terms of assembly, heterodimer of HisH and HisF.

The protein resides in the cytoplasm. The catalysed reaction is 5-[(5-phospho-1-deoxy-D-ribulos-1-ylimino)methylamino]-1-(5-phospho-beta-D-ribosyl)imidazole-4-carboxamide + L-glutamine = D-erythro-1-(imidazol-4-yl)glycerol 3-phosphate + 5-amino-1-(5-phospho-beta-D-ribosyl)imidazole-4-carboxamide + L-glutamate + H(+). Its pathway is amino-acid biosynthesis; L-histidine biosynthesis; L-histidine from 5-phospho-alpha-D-ribose 1-diphosphate: step 5/9. IGPS catalyzes the conversion of PRFAR and glutamine to IGP, AICAR and glutamate. The HisF subunit catalyzes the cyclization activity that produces IGP and AICAR from PRFAR using the ammonia provided by the HisH subunit. In Lactococcus lactis subsp. cremoris (strain MG1363), this protein is Imidazole glycerol phosphate synthase subunit HisF.